A 286-amino-acid polypeptide reads, in one-letter code: MPNTMQALNTQPLNDTLITKSITAADYVPTLDAMLSRTLARIALKKEQGLRTPDELWIVDHNDVYTLGQAGKEEHILQRTNTPIIKTDRGGQVTWHGHGQLVMYWLFDLDSVGWSVRNMVSHAEQAIEDVVNDCLKSPASTDTIHISARARRDAPGVYIYADTAAEIDSAHRSTDEIKVDNTIMIGKIASLGFKIKHGFSYHGVAINLNCDLSAFNAINPCGYAGMQMLRLADFVNMNQATTPQPNNPTLTDDAKTITYEQFTQKLIDNIAQRHAGVIPLRELAPK.

The BPL/LPL catalytic domain occupies 50–278; it reads LRTPDELWIV…NIAQRHAGVI (229 aa). Substrate is bound by residues 89 to 96, 190 to 192, and 203 to 205; these read RGGQVTWH, SLG, and GVA. Cys-221 serves as the catalytic Acyl-thioester intermediate.

The protein belongs to the LipB family.

It localises to the cytoplasm. The catalysed reaction is octanoyl-[ACP] + L-lysyl-[protein] = N(6)-octanoyl-L-lysyl-[protein] + holo-[ACP] + H(+). Its pathway is protein modification; protein lipoylation via endogenous pathway; protein N(6)-(lipoyl)lysine from octanoyl-[acyl-carrier-protein]: step 1/2. Catalyzes the transfer of endogenously produced octanoic acid from octanoyl-acyl-carrier-protein onto the lipoyl domains of lipoate-dependent enzymes. Lipoyl-ACP can also act as a substrate although octanoyl-ACP is likely to be the physiological substrate. The protein is Octanoyltransferase of Psychrobacter arcticus (strain DSM 17307 / VKM B-2377 / 273-4).